The chain runs to 475 residues: Bifunctional protein HldE (475 aa).

The interval 1 to 321 (MADKIDISLY…RALHQITASH (321 aa)) is ribokinase. Position 197 to 200 (197 to 200 (NLKE)) interacts with ATP. The active site involves Asp-266. The tract at residues 346–475 (MTNGCFDILH…TSRLVEKMLN (130 aa)) is cytidylyltransferase.

The protein in the N-terminal section; belongs to the carbohydrate kinase PfkB family. In the C-terminal section; belongs to the cytidylyltransferase family. As to quaternary structure, homodimer.

It carries out the reaction D-glycero-beta-D-manno-heptose 7-phosphate + ATP = D-glycero-beta-D-manno-heptose 1,7-bisphosphate + ADP + H(+). The catalysed reaction is D-glycero-beta-D-manno-heptose 1-phosphate + ATP + H(+) = ADP-D-glycero-beta-D-manno-heptose + diphosphate. It functions in the pathway nucleotide-sugar biosynthesis; ADP-L-glycero-beta-D-manno-heptose biosynthesis; ADP-L-glycero-beta-D-manno-heptose from D-glycero-beta-D-manno-heptose 7-phosphate: step 1/4. The protein operates within nucleotide-sugar biosynthesis; ADP-L-glycero-beta-D-manno-heptose biosynthesis; ADP-L-glycero-beta-D-manno-heptose from D-glycero-beta-D-manno-heptose 7-phosphate: step 3/4. Its function is as follows. Catalyzes the phosphorylation of D-glycero-D-manno-heptose 7-phosphate at the C-1 position to selectively form D-glycero-beta-D-manno-heptose-1,7-bisphosphate. In terms of biological role, catalyzes the ADP transfer from ATP to D-glycero-beta-D-manno-heptose 1-phosphate, yielding ADP-D-glycero-beta-D-manno-heptose. The chain is Bifunctional protein HldE from Coxiella burnetii (strain Dugway 5J108-111).